Here is a 532-residue protein sequence, read N- to C-terminus: MSSEKFTSISPAEFFKRNPELAGFSNPARALYQTVRELVENALDATDVHNILPSIKIIIELVDPQKQIYKVNVEDNGIGIPPHIVPNAFGKVLYSSKYVLRQTRGMYGLGVKAAVLYSQMYQERPVEVVTSPINSKRIYFFKLKIDVVKNEPIILQKTSVVNEKNWHGTSVTLYLYADWQRAKQKIYEYVKKTYIISPYAEFFFKDPDNNVIYYKRLTDKIPEPPKEVKPHPYGVDIELIKFMIVKKDKPVPVRDFLINEFQSIGDVTADKILEMAKLPKDKKTTELTDEEISRLVEVMKKFDDFRPPSAEALSVIGEDLIKLGLKSIFNPEFAEAITRKPKAYQGHPFIVEAGIAYGGAIQPSPEPIVLRYANKIPLIYDEKSDVIWKVVTEEMDWKRYGIEEEQPPLVVMVHLCSTKVPYRSAGKESIADVEEIEKEIKLALMDVARKLKKYITEKRKEEEAKKRLITYLKYIPEVSRGLALFLVGGDKQKIGDAYSDLREKLLKIALNKLEVNDKKLEEEIRNYKVEEL.

Residues Asn41, Asp75, 96–97 (SK), 105–112 (GMYGLGVK), and Lys427 contribute to the ATP site.

Belongs to the TOP6B family. Homodimer. Heterotetramer of two Top6A and two Top6B chains.

It catalyses the reaction ATP-dependent breakage, passage and rejoining of double-stranded DNA.. Relaxes both positive and negative superturns and exhibits a strong decatenase activity. The sequence is that of Type 2 DNA topoisomerase 6 subunit B from Sulfurisphaera tokodaii (strain DSM 16993 / JCM 10545 / NBRC 100140 / 7) (Sulfolobus tokodaii).